A 512-amino-acid chain; its full sequence is 2,3-bisphosphoglycerate-independent phosphoglycerate mutase (512 aa).

Mn(2+) contacts are provided by aspartate 12 and serine 62. The active-site Phosphoserine intermediate is serine 62. Residues histidine 123, 154–155 (RD), arginine 181, arginine 187, 253–256 (RPDR), and lysine 336 each bind substrate. Mn(2+)-binding residues include aspartate 403, histidine 407, aspartate 444, histidine 445, and histidine 462.

The protein belongs to the BPG-independent phosphoglycerate mutase family. In terms of assembly, monomer. The cofactor is Mn(2+).

The catalysed reaction is (2R)-2-phosphoglycerate = (2R)-3-phosphoglycerate. It functions in the pathway carbohydrate degradation; glycolysis; pyruvate from D-glyceraldehyde 3-phosphate: step 3/5. Its function is as follows. Catalyzes the interconversion of 2-phosphoglycerate and 3-phosphoglycerate. This chain is 2,3-bisphosphoglycerate-independent phosphoglycerate mutase, found in Aster yellows witches'-broom phytoplasma (strain AYWB).